The primary structure comprises 317 residues: Protease 7 (317 aa).

The signal sequence occupies residues 1–20 (MRAKLLGIVLTTPIAISSFA). At 21–31 (STETLSFTPDN) the chain is on the periplasmic side. The beta stranded transmembrane segment at 32–41 (INADISLGTL) threads the bilayer. The Extracellular segment spans residues 42-69 (SGKTKERVYLAEEGGRKVSQLDWKFNNA). Residues 70–78 (AIIKGAINW) form a beta stranded membrane-spanning segment. Over 79–83 (DLMPQ) the chain is Periplasmic. A beta stranded membrane pass occupies residues 84–92 (ISIGAAGWT). Over 93–130 (TLGSRGGNMVDQDWMDSSNPGTWTDESRHPDTQLNYAN) the chain is Extracellular. Active-site residues include Asp103 and Asp105. A beta stranded transmembrane segment spans residues 131-140 (EFDLNIKGWL). At 141–145 (LNEPN) the chain is on the periplasmic side. The beta stranded transmembrane segment at 146–156 (YRLGLMAGYQE) threads the bilayer. The Extracellular portion of the chain corresponds to 157 to 197 (SRYSFTARGGSYIYSSEEGFRDDIGSFPNGERAIGYKQRFK). The chain crosses the membrane as a beta stranded span at residues 198–209 (MPYIGLTGSYRY). Residues 210 to 211 (ED) lie on the Periplasmic side of the membrane. A beta stranded transmembrane segment spans residues 212 to 221 (FELGGTFKYS). Topologically, residues 222–250 (GWVEASDNDEHYDPGKRITYRSKVKDQNY) are extracellular. Residues Asp230 and His232 contribute to the active site. Residues 251–261 (YSVSVNAGYYV) traverse the membrane as a beta stranded segment. Over 262–264 (TPN) the chain is Periplasmic. A beta stranded transmembrane segment spans residues 265–274 (AKVYVEGTWN). Over 275–306 (RVTNKKGNTSLYDHNDNTSDYSKNGAGIENYN) the chain is Extracellular. The chain crosses the membrane as a beta stranded span at residues 307–316 (FITTAGLKYT). Residue Phe317 is a topological domain, periplasmic.

The protein belongs to the peptidase A26 family. As to quaternary structure, homopentamer.

The protein resides in the cell outer membrane. It catalyses the reaction Has a virtual requirement for Arg in the P1 position and a slightly less stringent preference for this residue in the P1' position, which can also contain Lys, Gly or Val.. Its activity is regulated as follows. Inhibited by zinc. Functionally, protease that can cleave T7 RNA polymerase, ferric enterobactin receptor protein (FEP), antimicrobial peptide protamine and other proteins. This protease has a specificity for paired basic residues. The polypeptide is Protease 7 (ompT) (Escherichia coli O157:H7).